A 933-amino-acid polypeptide reads, in one-letter code: Myocardin (933 aa).

The MEF2C-binding motif lies at 12–27 (IRSKFRSVLQLRLQQR). RPEL repeat units follow at residues 18-43 (SVLQ…PPLR), 62-87 (DTLK…QASS), and 106-131 (DDLN…PVDC). The tract at residues 153–205 (FEEDSSSDGLSPDQTRSEDLPGSAGSPLDTKAAETPLAGPRGTVQDLTLGSEN) is HDAC5-binding. 2 disordered regions span residues 154–282 (EEDS…PPPM) and 324–365 (NEQM…GPLP). The span at 210-220 (SAPQSGNQSDL) shows a compositional bias: polar residues. Over residues 248–265 (NRHKKPKDPKPKVKKLKY) the composition is skewed to basic residues. A compositionally biased stretch (low complexity) spans 330-346 (NPNSSSAPLSSTPLSPA). Residues 347–357 (KNSFSGQTGVS) show a composition bias toward polar residues. The region spanning 368–402 (LDDLKVSELRQQLRIRGLPVSGTKTALMDRLRPFQ) is the SAP domain. A phosphoserine; by GSK3-beta mark is found at Ser-445, Ser-449, Ser-453, and Ser-457. Positions 515-550 (LVEKQKVINELTWKLQQEQRQVEELRMQLQKQKRGT) form a coiled coil. Residues 568 to 613 (DAGSSCPFAPLPRAVKRQSNSSEEQPAAGDAARLRPLGNTHCAESS) form a disordered region. Ser-621, Ser-625, Ser-629, and Ser-633 each carry phosphoserine; by GSK3-beta. 2 disordered regions span residues 630–672 (PQHS…VSSP) and 760–794 (PKIP…FDHY). The tract at residues 712–933 (ITQPPSYEDA…SPMDLHLQQW (222 aa)) is required for interaction with and ubiquitination by STUB1. Residues Ser-810, Ser-857, and Ser-864 each carry the phosphoserine; by MAPK1 and MAPK3 modification. Thr-891 is subject to Phosphothreonine; by MAPK1 and MAPK3.

As to quaternary structure, homodimer. Interacts with MLLT7/FOXO4. Interacts with SRF, its association does not depend on specific DNA sequences for ternary complex formation. Interacts (via C-terminal) with EP300 (via the CREB-binding domain). Interacts with HDAC4 and HDAC5. Interacts with MEF2C. Interacts (via C-terminus) with STUB1/CHIP. Interacts with PURB. In terms of processing, ubiquitinated; by STUB1/CHIP at the C-terminus, leading to its degradation by the proteasome. Phosphorylation by GSK3B is required for STUB1/CHIP-mediated ubiquitination. Phosphorylation negatively regulates the intrinsic myocardin transcriptional activity. Phosphorylated; by GSK3B. As to expression, expressed in the heart and in smooth muscle cells-containing tissues (aorta, pulmonary vein, lung), but is not detectable in skeletal muscle, liver, kidney and spleen.

Its subcellular location is the nucleus. Functionally, smooth muscle cells (SM) and cardiac muscle cells-specific transcriptional factor which uses the canonical single or multiple CArG boxes DNA sequence. Acts as a cofactor of serum response factor (SRF) with the potential to modulate SRF-target genes. Plays a crucial role in cardiogenesis, urinary bladder development, and differentiation of the smooth muscle cell lineage (myogenesis). Positively regulates the transcription of genes involved in vascular smooth muscle contraction. The chain is Myocardin (MYOCD) from Sus scrofa (Pig).